The sequence spans 332 residues: uncharacterized protein (332 aa).

An N-terminal signal peptide occupies residues 1–26 (MSSLGKLLKLTLLGILLSFSCKFVFG).

The protein resides in the endoplasmic reticulum. This is an uncharacterized protein from Schizosaccharomyces pombe (strain 972 / ATCC 24843) (Fission yeast).